Reading from the N-terminus, the 154-residue chain is Toxin YhaV (154 aa).

Homohexamer; forms a complex with PrlF (SohA) with stoichiometry PrlF(2)-YhaV(4), possibly as a YhaV(2)-PrlF(2)-YhaV(2) complex like the MazFE complex. May dimerize in solution.

In terms of biological role, toxic component of a type II toxin-antitoxin (TA) system. Has RNase activity in vitro. Acts as a transcription factor. The YhaV/PrlF complex binds the prlF-yhaV operon, probably negatively regulating its expression. This is Toxin YhaV (yhaV) from Escherichia coli O6:H1 (strain CFT073 / ATCC 700928 / UPEC).